Here is an 860-residue protein sequence, read N- to C-terminus: Leucine--tRNA ligase (860 aa).

The 'HIGH' region motif lies at 42-52; that stretch reads PYPSGRLHMGH. The 'KMSKS' region signature appears at 619-623; sequence KMSKS. Lysine 622 is an ATP binding site.

The protein belongs to the class-I aminoacyl-tRNA synthetase family.

The protein localises to the cytoplasm. It carries out the reaction tRNA(Leu) + L-leucine + ATP = L-leucyl-tRNA(Leu) + AMP + diphosphate. In Escherichia coli O6:K15:H31 (strain 536 / UPEC), this protein is Leucine--tRNA ligase.